Consider the following 559-residue polypeptide: YTH domain-containing family protein 1 (559 aa).

The interval 1–49 (MSATSVDPQRTKGQDNKVQNGSLHQKDAVHDNDFEPYLSGQSNPSNSYP) is disordered. The residue at position 2 (Ser-2) is an N-acetylserine. Residues 24–33 (HQKDAVHDND) show a composition bias toward basic and acidic residues. The residue at position 182 (Ser-182) is a Phosphoserine. Positions 239–365 (SKPAKPQPKM…PTSAPSVESH (127 aa)) are disordered. Low complexity-rich tracts occupy residues 279–305 (PAPK…AQPL) and 314–326 (QPQY…PLQP). The span at 343 to 361 (GANSDSNSVGNAQPTSAPS) shows a compositional bias: polar residues. The YTH domain maps to 389-523 (GRVFIIKSYS…EKAKQVLKII (135 aa)). RNA-binding positions include 395-397 (KSY), Asp-401, 411-412 (WC), Asn-441, Trp-465, and Trp-470.

It belongs to the YTHDF family. YTHDF1 subfamily. In terms of assembly, interacts with CNOT1; promoting recruitment of the CCR4-NOT complex. Interacts with ribosomes. Interacts with eIF3 (EIF3A or EIF3B). Interacts with YTHDF3. Ubiquitinated by the CUL7-FBXW8 E3 ligase complex leading to degradation. Deubiquitinated and stabilized by USP5 by removing 'Lys-11'-linked polyubiquitination. In brain, preferentially expressed in the hippocampus.

It localises to the cytoplasm. It is found in the P-body. Its subcellular location is the stress granule. Specifically recognizes and binds N6-methyladenosine (m6A)-containing mRNAs, and regulates their stability. M6A is a modification present at internal sites of mRNAs and some non-coding RNAs and plays a role in mRNA stability and processing. Acts as a regulator of mRNA stability by promoting degradation of m6A-containing mRNAs via interaction with the CCR4-NOT complex. The YTHDF paralogs (YTHDF1, YTHDF2 and YTHDF3) share m6A-containing mRNAs targets and act redundantly to mediate mRNA degradation and cellular differentiation. Required to facilitate learning and memory formation in the hippocampus by binding to m6A-containing neuronal mRNAs. Acts as a regulator of axon guidance by binding to m6A-containing ROBO3 transcripts. Acts as a negative regulator of antigen cross-presentation in myeloid dendritic cells. In the context of tumorigenesis, negative regulation of antigen cross-presentation limits the anti-tumor response by reducing efficiency of tumor-antigen cross-presentation. Promotes formation of phase-separated membraneless compartments, such as P-bodies or stress granules, by undergoing liquid-liquid phase separation upon binding to mRNAs containing multiple m6A-modified residues: polymethylated mRNAs act as a multivalent scaffold for the binding of YTHDF proteins, juxtaposing their disordered regions and thereby leading to phase separation. The resulting mRNA-YTHDF complexes then partition into different endogenous phase-separated membraneless compartments, such as P-bodies, stress granules or neuronal RNA granules. The protein is YTH domain-containing family protein 1 of Mus musculus (Mouse).